The primary structure comprises 119 residues: Ribonuclease P protein component (119 aa).

It belongs to the RnpA family. Consists of a catalytic RNA component (M1 or rnpB) and a protein subunit.

The enzyme catalyses Endonucleolytic cleavage of RNA, removing 5'-extranucleotides from tRNA precursor.. RNaseP catalyzes the removal of the 5'-leader sequence from pre-tRNA to produce the mature 5'-terminus. It can also cleave other RNA substrates such as 4.5S RNA. The protein component plays an auxiliary but essential role in vivo by binding to the 5'-leader sequence and broadening the substrate specificity of the ribozyme. In Yersinia enterocolitica serotype O:8 / biotype 1B (strain NCTC 13174 / 8081), this protein is Ribonuclease P protein component.